Consider the following 277-residue polypeptide: Protein CMSS1 (277 aa).

Acidic residues predominate over residues 1–14 (MADDLGNEWWEEPA). Residues 1–91 (MADDLGNEWW…QHAPTAGTPE (91 aa)) are disordered. Basic and acidic residues predominate over residues 24–34 (EEVKESEESKG). The segment covering 35–52 (NKKKKIPSGKTQVKRKKE) has biased composition (basic residues). A compositionally biased stretch (basic and acidic residues) spans 53-66 (VKVSQEAEKEDSAP).

Belongs to the CMS1 family.

The protein is Protein CMSS1 (cmss1) of Xenopus laevis (African clawed frog).